A 264-amino-acid polypeptide reads, in one-letter code: TLC domain-containing protein 4-B (264 aa).

A run of 6 helical transmembrane segments spans residues 6–26 (VYVV…VSPV), 50–70 (LVST…LWYD), 84–104 (LVKL…LLLA), 110–130 (MGDV…GYVL), 169–189 (LVVA…IAVM), and 210–230 (LAIQ…NIIW). The TLC domain maps to 41-243 (NKLNDWNSRL…IARGCYKVIT (203 aa)).

The protein belongs to the TLCD4 family.

The protein resides in the membrane. The protein is TLC domain-containing protein 4-B (tlcd4b) of Danio rerio (Zebrafish).